Reading from the N-terminus, the 646-residue chain is Glutamine--tRNA ligase protein virJ (646 aa).

The segment at 25 to 65 (NELKKRIQKRARKAAAAANRSNAQQEKGNKPAANKPAAKPE) is disordered. The segment covering 38–61 (AAAAANRSNAQQEKGNKPAANKPA) has biased composition (low complexity). The 'HIGH' region motif lies at 98 to 108 (PEPNGYLHLGH). Residues 99-101 (EPN) and 105-111 (HLGHAKA) each bind ATP. D147 and Y296 together coordinate L-glutamine. ATP-binding positions include T315, 344 to 345 (RL), and 352 to 354 (MSK). The short motif at 351–355 (IMSKR) is the 'KMSKS' region element.

The protein belongs to the class-I aminoacyl-tRNA synthetase family.

It carries out the reaction tRNA(Gln) + L-glutamine + ATP = L-glutaminyl-tRNA(Gln) + AMP + diphosphate. Glutamine--tRNA ligase; part of the gene cluster that mediates the biosynthesis of virensols and trichoxide, fungal natural products that contain or are derived from a salicylaldehyde core. VirJ does not seem to play any role in virensols and trichoxide biosynthesis. The polypeptide is Glutamine--tRNA ligase protein virJ (Hypocrea virens (strain Gv29-8 / FGSC 10586) (Gliocladium virens)).